The following is a 511-amino-acid chain: Sodium/proline symporter 2 (511 aa).

13 helical membrane passes run 16 to 36 (WQTY…GYYG), 54 to 74 (IGPY…WMIM), 85 to 105 (LSAM…YFVV), 139 to 159 (IISG…GFVS), 175 to 195 (GLLM…YLAV), 204 to 224 (VIML…LNGI), 246 to 266 (VLGI…PHII), 286 to 306 (ISWM…GIAF), 327 to 347 (ILFH…AIMS), 381 to 401 (FLMV…WIAW), 410 to 430 (LVGN…IFSL), 438 to 458 (TGAL…IVWI), and 467 to 487 (LFGM…TYFV).

The protein belongs to the sodium:solute symporter (SSF) (TC 2.A.21) family.

It is found in the cell membrane. The enzyme catalyses L-proline(in) + Na(+)(in) = L-proline(out) + Na(+)(out). In terms of biological role, catalyzes the sodium-dependent uptake of extracellular L-proline. The polypeptide is Sodium/proline symporter 2 (putP2) (Staphylococcus saprophyticus subsp. saprophyticus (strain ATCC 15305 / DSM 20229 / NCIMB 8711 / NCTC 7292 / S-41)).